A 542-amino-acid chain; its full sequence is CTP synthase (542 aa).

An amidoligase domain region spans residues 1 to 265; that stretch reads MARYVFITGG…DSEVLSAFGM (265 aa). Ser13 provides a ligand contact to CTP. Ser13 lines the UTP pocket. ATP is bound at residue 14-19; it reads SLGKGI. Tyr54 serves as a coordination point for L-glutamine. ATP is bound at residue Asp71. 2 residues coordinate Mg(2+): Asp71 and Glu139. CTP-binding positions include 146–148, 186–191, and Lys222; these read DIE and KTKPTQ. Residues 186 to 191 and Lys222 each bind UTP; that span reads KTKPTQ. The region spanning 291–541 is the Glutamine amidotransferase type-1 domain; it reads TIAVVGKYTG…IEATVEQSRL (251 aa). An L-glutamine-binding site is contributed by Ala353. Catalysis depends on Cys380, which acts as the Nucleophile; for glutamine hydrolysis. Residues 381–384, Glu404, and Arg469 each bind L-glutamine; that span reads FGMQ. Active-site residues include His514 and Glu516.

Belongs to the CTP synthase family. In terms of assembly, homotetramer.

It catalyses the reaction UTP + L-glutamine + ATP + H2O = CTP + L-glutamate + ADP + phosphate + 2 H(+). The catalysed reaction is L-glutamine + H2O = L-glutamate + NH4(+). It carries out the reaction UTP + NH4(+) + ATP = CTP + ADP + phosphate + 2 H(+). It participates in pyrimidine metabolism; CTP biosynthesis via de novo pathway; CTP from UDP: step 2/2. Allosterically activated by GTP, when glutamine is the substrate; GTP has no effect on the reaction when ammonia is the substrate. The allosteric effector GTP functions by stabilizing the protein conformation that binds the tetrahedral intermediate(s) formed during glutamine hydrolysis. Inhibited by the product CTP, via allosteric rather than competitive inhibition. Catalyzes the ATP-dependent amination of UTP to CTP with either L-glutamine or ammonia as the source of nitrogen. Regulates intracellular CTP levels through interactions with the four ribonucleotide triphosphates. The sequence is that of CTP synthase from Bartonella henselae (strain ATCC 49882 / DSM 28221 / CCUG 30454 / Houston 1) (Rochalimaea henselae).